The primary structure comprises 361 residues: S-adenosylmethionine:tRNA ribosyltransferase-isomerase (361 aa).

Belongs to the QueA family. In terms of assembly, monomer.

The protein localises to the cytoplasm. The enzyme catalyses 7-aminomethyl-7-carbaguanosine(34) in tRNA + S-adenosyl-L-methionine = epoxyqueuosine(34) in tRNA + adenine + L-methionine + 2 H(+). The protein operates within tRNA modification; tRNA-queuosine biosynthesis. Its function is as follows. Transfers and isomerizes the ribose moiety from AdoMet to the 7-aminomethyl group of 7-deazaguanine (preQ1-tRNA) to give epoxyqueuosine (oQ-tRNA). The sequence is that of S-adenosylmethionine:tRNA ribosyltransferase-isomerase from Actinobacillus pleuropneumoniae serotype 5b (strain L20).